A 136-amino-acid polypeptide reads, in one-letter code: Nucleoside diphosphate kinase (136 aa).

ATP contacts are provided by K10, F58, R86, T92, R104, and N114. The active-site Pros-phosphohistidine intermediate is the H117.

The protein belongs to the NDK family. As to quaternary structure, homotetramer. It depends on Mg(2+) as a cofactor.

The protein localises to the cytoplasm. The catalysed reaction is a 2'-deoxyribonucleoside 5'-diphosphate + ATP = a 2'-deoxyribonucleoside 5'-triphosphate + ADP. It catalyses the reaction a ribonucleoside 5'-diphosphate + ATP = a ribonucleoside 5'-triphosphate + ADP. In terms of biological role, major role in the synthesis of nucleoside triphosphates other than ATP. The ATP gamma phosphate is transferred to the NDP beta phosphate via a ping-pong mechanism, using a phosphorylated active-site intermediate. This is Nucleoside diphosphate kinase from Mycolicibacterium gilvum (strain PYR-GCK) (Mycobacterium gilvum (strain PYR-GCK)).